Here is a 377-residue protein sequence, read N- to C-terminus: MFVSIPSIRKTVMSLCAVPLMAACAFAPGMRFDPQRPLDPADNASVPKITQITPDLVRGGQAQVPRENVDVDQLLAKATPYRIGTGDILSIVVWDHPELVFPTQTYSIGSAYDIANFAGTPNVPGYVVSTGGDIQFPYAGVIKVAGRTQNEVRDEITRAIARVVKDPQVTVRVLAYRSQRIYVDGEVKTPGQQSIDDVPMTLVEALNRAGGINVTTGDNSRIRVTRGGKQWVLSMPALMHQGIDPASVLLRGGDIVRVEPREDSKVFVTGEVVRPSTVLPRNGKLTLSEALGEAGGVSPVSSDPRNVYVIRRAAEGEPQVYHLDAKSPVALALAEGFELRPKDVVYVDAGGLVRWSRVINLLVPTATPLIGAAAVAK.

An N-terminal signal peptide occupies residues 1 to 23 (MFVSIPSIRKTVMSLCAVPLMAA). A lipid anchor (N-palmitoyl cysteine) is attached at Cys-24. Cys-24 carries the S-diacylglycerol cysteine lipid modification.

Belongs to the BexD/CtrA/VexA family.

The protein localises to the cell outer membrane. Probably involved in polymerization and/or export of exopolysaccharide EPS I which functions as a virulence factor. The chain is EPS I polysaccharide export outer membrane protein EpsA (epsA) from Ralstonia solanacearum (Pseudomonas solanacearum).